A 386-amino-acid chain; its full sequence is Bifunctional enzyme IspD/IspF (386 aa).

The segment at 1–230 (MNSVPSLPGQ…LEEQSMSVIP (230 aa)) is 2-C-methyl-D-erythritol 4-phosphate cytidylyltransferase. The segment at 231 to 386 (RTGMGFDVHR…AQAVATVVSG (156 aa)) is 2-C-methyl-D-erythritol 2,4-cyclodiphosphate synthase. D237 and H239 together coordinate a divalent metal cation. 4-CDP-2-C-methyl-D-erythritol 2-phosphate-binding positions include 237-239 (DVH) and 263-264 (HS). H271 provides a ligand contact to a divalent metal cation. 4-CDP-2-C-methyl-D-erythritol 2-phosphate is bound by residues 285-287 (DIG), 361-364 (TTTE), and R371.

In the N-terminal section; belongs to the IspD/TarI cytidylyltransferase family. IspD subfamily. The protein in the C-terminal section; belongs to the IspF family. The cofactor is a divalent metal cation.

It catalyses the reaction 2-C-methyl-D-erythritol 4-phosphate + CTP + H(+) = 4-CDP-2-C-methyl-D-erythritol + diphosphate. It carries out the reaction 4-CDP-2-C-methyl-D-erythritol 2-phosphate = 2-C-methyl-D-erythritol 2,4-cyclic diphosphate + CMP. It functions in the pathway isoprenoid biosynthesis; isopentenyl diphosphate biosynthesis via DXP pathway; isopentenyl diphosphate from 1-deoxy-D-xylulose 5-phosphate: step 2/6. The protein operates within isoprenoid biosynthesis; isopentenyl diphosphate biosynthesis via DXP pathway; isopentenyl diphosphate from 1-deoxy-D-xylulose 5-phosphate: step 4/6. Bifunctional enzyme that catalyzes the formation of 4-diphosphocytidyl-2-C-methyl-D-erythritol from CTP and 2-C-methyl-D-erythritol 4-phosphate (MEP) (IspD), and catalyzes the conversion of 4-diphosphocytidyl-2-C-methyl-D-erythritol 2-phosphate (CDP-ME2P) to 2-C-methyl-D-erythritol 2,4-cyclodiphosphate (ME-CPP) with a corresponding release of cytidine 5-monophosphate (CMP) (IspF). The polypeptide is Bifunctional enzyme IspD/IspF (Novosphingobium aromaticivorans (strain ATCC 700278 / DSM 12444 / CCUG 56034 / CIP 105152 / NBRC 16084 / F199)).